The sequence spans 336 residues: MSTSSEPYLEPLRLFLNKECIWRKTGKGAKHREYRCLSSSSPWSILPHQAARRVWKYEINIIIVKKRNDDYIISMAIEGLHYQQILCPKVLTQLFFILHSHGGTKFYKLTFDPFKPMNAELAVPLYDTTPLPHMTMQGLSVYDHCSVVGKPICAQVAGSITQIGTCGVWAVTTGAQTNIVCFALRYDLAVCISDPKVFPSMARCMASAVGCAQETCSYCTGHNKHVEVFDVNGDYGKNKELCFCSTPCGDWDFRDESMKPLFSKNDDMVGIRVREPPNSENTIFSKASAYFYGITRDGKEVDLSDENFILLKIDPRLSHMIIVACPILKRMCMIKS.

Belongs to the herpesviridae cytoplasmic envelopment protein 2 family. As to quaternary structure, interacts with cytoplasmic envelopment protein 3 and with the capsid.

Its subcellular location is the virion tegument. It localises to the host cytoplasm. The protein localises to the host nucleus. Functionally, plays a critical role in cytoplasmic virus egress. Participates in the final step of tegumentation and envelope acquisition within the host cytoplasm by directly interacting with the capsid. Upon virion binding to target cell, a signaling cascade is triggered to disrupt the interaction with the capsid, thereby preparing capsid uncoating. In Elephantid herpesvirus 1 (isolate Asian elephant/Berlin/Kiba/1998) (EIHV-1), this protein is Cytoplasmic envelopment protein 2.